The primary structure comprises 131 residues: Ribosomally synthesized cyclic peptide phomopsin precursor gigA (131 aa).

Positions 1-18 are cleaved as a signal peptide; sequence MQFTLIFFYATLAAFGLA. Propeptides lie at residues 19-38, 48-65, 75-92, 102-119, and 129-131; these read APSE…LDKR, ADLV…LDKR, ADMV…LDKR, ADMV…LAKR, and ADM.

In terms of processing, gigA is processed by several endopeptidases including kexin proteases to produce 2 identical copies of the nonaxapeptide Ile-Asn-Phe-Lys-Ile-Pro-Tyr-Thr-Gly, one copy of the nonaketide Ile-Gly-Phe-Lys-Leu-Pro-Tyr-Arg-Gly and one copy of the nonaketide Pro-Asn-Phe-Lys-Met-Pro-Tyr-Arg-Gly, that are further modified into phomapsins B, C and A, respectively. After being excised from the precursor peptide, the core peptides are cyclized and modified post-translationally by enzymes encoded within the gene cluster. Epichloecyclin biosynthesis requires only dimethylation of the side-chain amino group of the conserved lysine for completion.

Its pathway is mycotoxin biosynthesis. Functionally, ribosomally synthesized cyclic peptide phomopsin precursor; part of the gene cluster that mediates the biosynthesis of the epichloecyclins, a group of nonapeptides, with a likely cyclic structure and dimethylation of the conserved lysine. The gigA translated product contains 4 repeated peptide embedding the nonapeptide Ile-Asn-Phe-Lys-Ile-Pro-Tyr-Thr-Gly in repeats 1 and 2, Ile-Gly-Phe-Lys-Leu-Pro-Tyr-Arg-Gly in repeat 3, and Pro-Asn-Phe-Lys-Met-Pro-Tyr-Arg-Gly in repeat 4 that are converted into epichloecyclins B, C and A, respectively. Moreover, removal of the last Gly residue in epichloecyclins B and C leads to epichloecyclins D and E, respectively. In Epichloe festucae (strain Fl1), this protein is Ribosomally synthesized cyclic peptide phomopsin precursor gigA (nc25).